The following is a 277-amino-acid chain: 3-methyl-2-oxobutanoate hydroxymethyltransferase (277 aa).

Mg(2+) contacts are provided by Asp53 and Asp96. 3-methyl-2-oxobutanoate contacts are provided by residues 53-54 (DS), Asp96, and Lys126. Glu128 is a Mg(2+) binding site. Catalysis depends on Glu195, which acts as the Proton acceptor.

This sequence belongs to the PanB family. Homodecamer; pentamer of dimers. Mg(2+) serves as cofactor.

Its subcellular location is the cytoplasm. It carries out the reaction 3-methyl-2-oxobutanoate + (6R)-5,10-methylene-5,6,7,8-tetrahydrofolate + H2O = 2-dehydropantoate + (6S)-5,6,7,8-tetrahydrofolate. The protein operates within cofactor biosynthesis; (R)-pantothenate biosynthesis; (R)-pantoate from 3-methyl-2-oxobutanoate: step 1/2. Its function is as follows. Catalyzes the reversible reaction in which hydroxymethyl group from 5,10-methylenetetrahydrofolate is transferred onto alpha-ketoisovalerate to form ketopantoate. The chain is 3-methyl-2-oxobutanoate hydroxymethyltransferase from Pelodictyon phaeoclathratiforme (strain DSM 5477 / BU-1).